The following is a 430-amino-acid chain: Protein IQ-DOMAIN 3 (430 aa).

The segment at 1-36 (MGKSWFSAVKKALSPEPKQKKEQKPHKSKKWFGKSK) is disordered. The short motif at 9 to 16 (VKKALSPE) is the Nuclear localization signal 1 element. Basic residues predominate over residues 23–35 (QKPHKSKKWFGKS). The IQ domain maps to 107 to 135 (EEIAAIKIQTAFRGYMARRALRALRGLVR). Positions 170-224 (RLRLSEDKQALTRQLQQKHNKDFDKTGENWNDSTLSREKVEANMLNKQVATMRRE) form a coiled coil. A calmodulin-binding region spans residues 213 to 231 (MLNKQVATMRREKALAYAF). Disordered stretches follow at residues 271-368 (ENHS…SQSV) and 385-430 (SNLS…TNLA). Residues 286 to 295 (ARSVASRAMS) show a composition bias toward low complexity. Polar residues predominate over residues 326–340 (SEDSNSIVSFQSEQP). The Nuclear localization signal 2 motif lies at 396–403 (AKKRLSFS).

The protein belongs to the IQD family. As to quaternary structure, binds to multiple calmodulin (CaM) in the presence of Ca(2+) and CaM-like proteins.

The protein resides in the nucleus. It localises to the nucleolus. Its subcellular location is the cytoplasm. It is found in the cytoskeleton. In terms of biological role, may be involved in cooperative interactions with calmodulins or calmodulin-like proteins. Recruits calmodulin proteins to microtubules, thus being a potential scaffold in cellular signaling and trafficking. May associate with nucleic acids and regulate gene expression at the transcriptional or post-transcriptional level. The protein is Protein IQ-DOMAIN 3 of Arabidopsis thaliana (Mouse-ear cress).